Consider the following 196-residue polypeptide: MNADQTLLVLASASPRRRELLAQLDIRFTVSAADIDETPHAGEAAEAYVGRLAREKAHVVASRHPGAWVLAADTTVALGAELLGKPRDAEEAQAMLTRLSGRTHDVYTGVALAGRHEETLVVRTRVTFRALSSGEMSWYANSGEPLDKAGAYAIQGKGGFLVAGVEGSTSNVVGLPLGETVALLERAGLPLPWRAS.

Catalysis depends on aspartate 73, which acts as the Proton acceptor.

This sequence belongs to the Maf family. YhdE subfamily. Requires a divalent metal cation as cofactor.

Its subcellular location is the cytoplasm. The catalysed reaction is dTTP + H2O = dTMP + diphosphate + H(+). The enzyme catalyses UTP + H2O = UMP + diphosphate + H(+). Functionally, nucleoside triphosphate pyrophosphatase that hydrolyzes dTTP and UTP. May have a dual role in cell division arrest and in preventing the incorporation of modified nucleotides into cellular nucleic acids. In Myxococcus xanthus (strain DK1622), this protein is dTTP/UTP pyrophosphatase.